We begin with the raw amino-acid sequence, 328 residues long: MSSGVNSTGSAAAAPEVDKMFFCYQCNQTVTISISSSADPFCPICNQGFLEEYEDPNPNQSLNFNPNSSDSFFPMADPFSTLLPLIFGSSAAAPSGMDFMSLFGPSMQPQARSTQQNPQSDAFDPFTFLQNHLQTLRSSGTHFEFVIENHPSDPGNRMPGNFGDYFFGPGLEQLIQQLAENDPNRYGTPPASKSAIDALPTVKVTKDMLKSEMNQCAVCMDEFEDGSDVKQMPCKHVFHQDCLLPWLELHNSCPVCRFELPTDDPDYENRSQGSQGSGDGQGSVEGQQTPRFSIQLPWPFRRQDGSGSGSGAPGTGGGNLETRGEDLD.

Ser-2 is modified (N-acetylserine). The segment at 216–257 adopts an RING-type; atypical zinc-finger fold; the sequence is CAVCMDEFEDGSDVKQMPCKHVFHQDCLLPWLELHNSCPVCR. Positions 264 to 328 are disordered; sequence DPDYENRSQG…NLETRGEDLD (65 aa). The segment covering 306–319 has biased composition (gly residues); it reads SGSGSGAPGTGGGN.

Auto-ubiquitinated as part of the enzymatic reaction. In terms of tissue distribution, expressed in leaves, roots, trichomes, stipules, and also in anthers and stigma of flowers.

It carries out the reaction S-ubiquitinyl-[E2 ubiquitin-conjugating enzyme]-L-cysteine + [acceptor protein]-L-lysine = [E2 ubiquitin-conjugating enzyme]-L-cysteine + N(6)-ubiquitinyl-[acceptor protein]-L-lysine.. Its pathway is protein modification; protein ubiquitination. E3 ubiquitin-protein ligase which accepts ubiquitin from an E2 ubiquitin-conjugating enzyme in the form of a thioester and then directly transfers the ubiquitin to targeted substrates. Promotes polyubiquitination of target proteins. The sequence is that of E3 ubiquitin-protein ligase RING1-like from Arabidopsis thaliana (Mouse-ear cress).